The primary structure comprises 235 residues: Vinculin (235 aa).

This sequence belongs to the vinculin/alpha-catenin family. As to quaternary structure, exhibits self-association properties. In terms of processing, phosphorylated on serines, threonines and tyrosines. Acetylated by myristic acid and/or palmitic acid.

The protein localises to the cell membrane. It is found in the cell junction. It localises to the adherens junction. The protein resides in the focal adhesion. Its subcellular location is the cytoplasm. The protein localises to the cytoskeleton. It is found in the sarcolemma. It localises to the cell projection. The protein resides in the podosome. Involved in cell adhesion. May be involved in the attachment of the actin-based microfilaments to the plasma membrane. This Xenopus laevis (African clawed frog) protein is Vinculin (vcl).